The sequence spans 77 residues: Subtilisin-chymotrypsin inhibitor CI-1C (77 aa).

The protein belongs to the protease inhibitor I13 (potato type I serine protease inhibitor) family.

Functionally, inhibits both subtilisin and chymotrypsin. This Hordeum vulgare (Barley) protein is Subtilisin-chymotrypsin inhibitor CI-1C.